A 574-amino-acid polypeptide reads, in one-letter code: Kelch-like protein 18 (574 aa).

The BTB domain occupies 66-105 (MFTNDMMECKQDEIVMQGMDPSALEALINFAYNGNLAIDQ). The 103-residue stretch at 140-242 (CLGVRQFAET…RPQFLSDRVQ (103 aa)) folds into the BACK domain. Kelch repeat units follow at residues 289 to 336 (LIYA…VVNG), 337 to 383 (LLYA…VLDG), 384 to 430 (QIYV…VFEG), 432 to 477 (IYVS…SLGS), 479 to 524 (MFVC…ASCG), and 525 to 571 (RLYA…CIPL).

Interacts with AURKA. Interacts (via BTB domain) with CUL3. Interacts (via kelch repeats) with UNC119.

It functions in the pathway protein modification; protein ubiquitination. Its function is as follows. Substrate-specific adapter of a BCR (BTB-CUL3-RBX1) E3 ubiquitin-protein ligase complex required for mitotic progression and cytokinesis. The BCR(KLHL18) E3 ubiquitin ligase complex mediates the ubiquitination of AURKA leading to its activation at the centrosome which is required for initiating mitotic entry. Regulates light-and dark-dependent alpha-transducin localization changes in rod photoreceptors through UNC119 ubiquitination and degradation. Preferentially ubiquitinates the unphosphorylated form of UNC119 over the phosphorylated form. In the presence of UNC119, under dark-adapted conditions alpha-transducin mislocalizes from the outer segment to the inner part of rod photoreceptors which leads to decreased photoreceptor damage caused by light. This chain is Kelch-like protein 18 (KLHL18), found in Homo sapiens (Human).